The primary structure comprises 597 residues: Glutamine--fructose-6-phosphate aminotransferase [isomerizing] (597 aa).

The active-site Nucleophile; for GATase activity is Cys-2. One can recognise a Glutamine amidotransferase type-2 domain in the interval 2 to 218; it reads CGIVGYIGDS…ENSVGQISLE (217 aa). 2 consecutive SIS domains span residues 276–416 and 449–587; these read IDPE…QLGT and LSKR…VDHP. The active-site For Fru-6P isomerization activity is Lys-592.

Homodimer.

Its subcellular location is the cytoplasm. It carries out the reaction D-fructose 6-phosphate + L-glutamine = D-glucosamine 6-phosphate + L-glutamate. Functionally, catalyzes the first step in hexosamine metabolism, converting fructose-6P into glucosamine-6P using glutamine as a nitrogen source. In Helicobacter pylori (strain J99 / ATCC 700824) (Campylobacter pylori J99), this protein is Glutamine--fructose-6-phosphate aminotransferase [isomerizing].